Here is a 643-residue protein sequence, read N- to C-terminus: Threonine--tRNA ligase (643 aa).

The region spanning 3-64 is the TGS domain; sequence DMINITFPDG…QEDGAVEIIT (62 aa). The tract at residues 245–542 is catalytic; that stretch reads DHRKLGKELK…LIEEHKGALP (298 aa). Zn(2+)-binding residues include C338, H389, and H519.

The protein belongs to the class-II aminoacyl-tRNA synthetase family. As to quaternary structure, homodimer. Zn(2+) serves as cofactor.

The protein resides in the cytoplasm. It carries out the reaction tRNA(Thr) + L-threonine + ATP = L-threonyl-tRNA(Thr) + AMP + diphosphate + H(+). Catalyzes the attachment of threonine to tRNA(Thr) in a two-step reaction: L-threonine is first activated by ATP to form Thr-AMP and then transferred to the acceptor end of tRNA(Thr). Also edits incorrectly charged L-seryl-tRNA(Thr). The chain is Threonine--tRNA ligase from Bacillus velezensis (strain DSM 23117 / BGSC 10A6 / LMG 26770 / FZB42) (Bacillus amyloliquefaciens subsp. plantarum).